The following is a 1140-amino-acid chain: Centrosomal protein of 135 kDa (1140 aa).

The tract at residues 11–64 (NIRKRLDQLGYRQTLSVDSLPLVEKLFSDLVHTTESLRQCRLSSGKAEKESANL) is homodimerization. 2 coiled-coil regions span residues 75–151 (NTRL…KNLR) and 199–416 (LQVA…FAVT). Phosphoserine is present on S439. Coiled coils occupy residues 447–644 (LKGI…LENK), 668–1036 (SLRI…LESL), and 1079–1113 (TSML…AIQE). Position 688 is a phosphoserine (S688). Residues 1117 to 1131 (LGLPTSPLSSTLKSP) show a composition bias toward low complexity. Residues 1117-1140 (LGLPTSPLSSTLKSPVQTPDHINA) are disordered. A Phosphothreonine modification is found at T1121. S1130 is modified (phosphoserine). Residue T1134 is modified to Phosphothreonine.

The protein belongs to the CEP135/TSGA10 family. As to quaternary structure, homodimer. Interacts with CEP250. Interacts with DCTN2.

The protein resides in the cytoplasm. The protein localises to the cytoskeleton. Its subcellular location is the microtubule organizing center. It is found in the centrosome. It localises to the centriole. Its function is as follows. Centrosomal microtubule-binding protein involved in centriole biogenesis. Acts as a scaffolding protein during early centriole biogenesis. Required for the targeting of centriole satellite proteins to centrosomes such as of PCM1, SSX2IP and CEP290 and recruitment of WRAP73 to centrioles. Also required for centriole-centriole cohesion during interphase by acting as a platform protein for CEP250 at the centriole. Required for the recruitment of CEP295 to the proximal end of new-born centrioles at the centriolar microtubule wall during early S phase in a PLK4-dependent manner. This is Centrosomal protein of 135 kDa (Cep135) from Mus musculus (Mouse).